A 231-amino-acid chain; its full sequence is Large ribosomal subunit protein uL5m (231 aa).

Belongs to the universal ribosomal protein uL5 family.

The protein localises to the mitochondrion. This chain is Large ribosomal subunit protein uL5m (RPL5), found in Prototheca wickerhamii.